Consider the following 368-residue polypeptide: 4-hydroxy-3-methylbut-2-en-1-yl diphosphate synthase (flavodoxin) (368 aa).

[4Fe-4S] cluster is bound by residues Cys271, Cys274, Cys306, and Glu313.

This sequence belongs to the IspG family. The cofactor is [4Fe-4S] cluster.

The enzyme catalyses (2E)-4-hydroxy-3-methylbut-2-enyl diphosphate + oxidized [flavodoxin] + H2O + 2 H(+) = 2-C-methyl-D-erythritol 2,4-cyclic diphosphate + reduced [flavodoxin]. It functions in the pathway isoprenoid biosynthesis; isopentenyl diphosphate biosynthesis via DXP pathway; isopentenyl diphosphate from 1-deoxy-D-xylulose 5-phosphate: step 5/6. Its function is as follows. Converts 2C-methyl-D-erythritol 2,4-cyclodiphosphate (ME-2,4cPP) into 1-hydroxy-2-methyl-2-(E)-butenyl 4-diphosphate. The protein is 4-hydroxy-3-methylbut-2-en-1-yl diphosphate synthase (flavodoxin) of Buchnera aphidicola subsp. Acyrthosiphon pisum (strain APS) (Acyrthosiphon pisum symbiotic bacterium).